An 854-amino-acid polypeptide reads, in one-letter code: A-kinase anchor protein 4 (854 aa).

Residues 1 to 188 constitute a propeptide that is removed on maturation; it reads MMAYSDTTMM…MTAAKNTNNN (188 aa). Ser-96, Ser-130, Ser-190, Ser-213, Ser-226, and Ser-272 each carry phosphoserine. The disordered stretch occupies residues 184 to 207; it reads NTNNNQSPSAPPAKPPSTQRAVIS. Residues 219-232 are PKA-RI and PKA-RII subunit binding domain; the sequence is FYVNRLSSLVIQMA. The tract at residues 287 to 323 is disordered; sequence RGTGEESREGGQKSFLYSELSNKSKSGDKQMSQRESK. The span at 288–297 shows a compositional bias: basic and acidic residues; that stretch reads GTGEESREGG. A Phosphoserine modification is found at Ser-300. Position 303 is a phosphotyrosine (Tyr-303). Residues Ser-304 and Ser-307 each carry the phosphoserine modification. Positions 311 to 323 are enriched in basic and acidic residues; the sequence is KSGDKQMSQRESK. Residues 336 to 345 form a PKA-RI-alpha subunit binding domain region; the sequence is YANQVASDMM. Phosphoserine is present on residues Ser-342, Ser-432, Ser-443, Ser-445, Ser-447, Ser-450, Ser-464, and Ser-492. A Phosphothreonine modification is found at Thr-506. A phosphoserine mark is found at Ser-536, Ser-581, Ser-627, and Ser-703.

Belongs to the AKAP110 family. Interacts with PRKAR1A and PRKAR2A. Interacts with ENO4. Interacts with QRICH2. Phosphorylated by STK33 during sperm flagella assembly. Testis specific; only expressed in round spermatids.

It is found in the cell projection. The protein resides in the cilium. Its subcellular location is the flagellum. In terms of biological role, major structural component of sperm fibrous sheath. Plays a role in sperm motility. In Homo sapiens (Human), this protein is A-kinase anchor protein 4.